Here is an 872-residue protein sequence, read N- to C-terminus: Probably inactive leucine-rich repeat receptor-like protein kinase At5g06940 (872 aa).

Residues Met1 to Ser26 form the signal peptide. At Phe27–Lys540 the chain is on the extracellular side. N-linked (GlcNAc...) asparagine glycans are attached at residues Asn55, Asn63, and Asn86. 18 LRR repeats span residues Ser79–Leu98, Pro99–Cys122, Val123–Phe146, Ser147–Leu169, Phe171–Lys193, Ser195–Gly217, Leu219–Leu243, Thr244–Ser267, Lys269–Gly292, Arg294–Cys316, Leu317–Leu340, Pro341–Ser365, Leu367–Lys389, Leu391–Ser412, Pro413–Cys435, Lys436–Leu459, His460–Asn482, and Lys484–Gly506. An N-linked (GlcNAc...) asparagine glycan is attached at Asn129. Asn255 carries N-linked (GlcNAc...) asparagine glycosylation. Asn297 carries N-linked (GlcNAc...) asparagine glycosylation. Asn374 carries an N-linked (GlcNAc...) asparagine glycan. An N-linked (GlcNAc...) asparagine glycan is attached at Asn419. An N-linked (GlcNAc...) asparagine glycan is attached at Asn489. A helical membrane pass occupies residues Ala541 to Tyr561. Topologically, residues Arg562–Ala872 are cytoplasmic. Thr585 carries the post-translational modification Phosphothreonine. In terms of domain architecture, Protein kinase spans Leu589–Ile863. ATP-binding positions include Glu595–Val603 and Lys617. Tyr662, Tyr699, Tyr754, and Tyr761 each carry phosphotyrosine.

Belongs to the protein kinase superfamily. Ser/Thr protein kinase family.

The protein resides in the membrane. This chain is Probably inactive leucine-rich repeat receptor-like protein kinase At5g06940, found in Arabidopsis thaliana (Mouse-ear cress).